The sequence spans 612 residues: Dihydroxy-acid dehydratase (612 aa).

Position 81 (aspartate 81) interacts with Mg(2+). [2Fe-2S] cluster is bound at residue cysteine 122. 2 residues coordinate Mg(2+): aspartate 123 and lysine 124. Lysine 124 carries the N6-carboxylysine modification. Cysteine 193 contributes to the [2Fe-2S] cluster binding site. Glutamate 489 is a Mg(2+) binding site. Catalysis depends on serine 515, which acts as the Proton acceptor.

This sequence belongs to the IlvD/Edd family. In terms of assembly, homodimer. [2Fe-2S] cluster is required as a cofactor. The cofactor is Mg(2+).

The enzyme catalyses (2R)-2,3-dihydroxy-3-methylbutanoate = 3-methyl-2-oxobutanoate + H2O. It carries out the reaction (2R,3R)-2,3-dihydroxy-3-methylpentanoate = (S)-3-methyl-2-oxopentanoate + H2O. The protein operates within amino-acid biosynthesis; L-isoleucine biosynthesis; L-isoleucine from 2-oxobutanoate: step 3/4. It participates in amino-acid biosynthesis; L-valine biosynthesis; L-valine from pyruvate: step 3/4. In terms of biological role, functions in the biosynthesis of branched-chain amino acids. Catalyzes the dehydration of (2R,3R)-2,3-dihydroxy-3-methylpentanoate (2,3-dihydroxy-3-methylvalerate) into 2-oxo-3-methylpentanoate (2-oxo-3-methylvalerate) and of (2R)-2,3-dihydroxy-3-methylbutanoate (2,3-dihydroxyisovalerate) into 2-oxo-3-methylbutanoate (2-oxoisovalerate), the penultimate precursor to L-isoleucine and L-valine, respectively. This is Dihydroxy-acid dehydratase from Teredinibacter turnerae (strain ATCC 39867 / T7901).